We begin with the raw amino-acid sequence, 63 residues long: Large ribosomal subunit protein uL29 (63 aa).

The protein belongs to the universal ribosomal protein uL29 family.

This Tolumonas auensis (strain DSM 9187 / NBRC 110442 / TA 4) protein is Large ribosomal subunit protein uL29.